The sequence spans 614 residues: Probable LRR receptor-like serine/threonine-protein kinase At5g63710 (614 aa).

A signal peptide spans 1–50 (MAHSGNGESFHDPLRGFIQRNCFRWNNQKLILQCFMALAFVGITSSTTQP). Topologically, residues 51–224 (DIEGGALLQL…VTSSKKKLRD (174 aa)) are extracellular. N-linked (GlcNAc...) asparagine glycans are attached at residues N65, N125, N146, and N175. LRR repeat units follow at residues 115 to 139 (LKFL…LGNM), 141 to 163 (NLQT…WSQL), and 164 to 187 (SNLK…FFSI). A helical membrane pass occupies residues 225-245 (ITLTASCVASIILFLGAMVMY). The Cytoplasmic segment spans residues 246-613 (HHHRVRRTKY…DQESIRLSTA (368 aa)). Residue T286 is modified to Phosphothreonine. The Protein kinase domain occupies 289-573 (FNESNLIGQG…GTGGLAEKWT (285 aa)). Residue 295–303 (IGQGGFGKV) participates in ATP binding. Phosphothreonine is present on T312. Position 317 (K317) interacts with ATP. Position 370 is a phosphoserine (S370). A Phosphothreonine modification is found at T389. The active-site Proton acceptor is the D416. A phosphothreonine mark is found at T449, T450, and T455. Y463 is modified (phosphotyrosine). Residue T466 is modified to Phosphothreonine. At S470 the chain carries Phosphoserine. Phosphothreonine is present on T545.

Belongs to the protein kinase superfamily. Ser/Thr protein kinase family.

The protein localises to the cell membrane. The catalysed reaction is L-seryl-[protein] + ATP = O-phospho-L-seryl-[protein] + ADP + H(+). It carries out the reaction L-threonyl-[protein] + ATP = O-phospho-L-threonyl-[protein] + ADP + H(+). The polypeptide is Probable LRR receptor-like serine/threonine-protein kinase At5g63710 (Arabidopsis thaliana (Mouse-ear cress)).